A 165-amino-acid chain; its full sequence is Neuritin-like protein (165 aa).

An N-terminal signal peptide occupies residues 1-35; it reads MMRCCRRRCCCRQPPHALRPLLLLPLVLLPPLAAA. Ala-139 is lipidated: GPI-anchor amidated alanine. A propeptide spans 140–165 (removed in mature form); that stretch reads PALPMAPAPPLLAAALALAYLLRPLA.

This sequence belongs to the neuritin family.

Its subcellular location is the cell membrane. The chain is Neuritin-like protein (NRN1L) from Homo sapiens (Human).